The following is a 1076-amino-acid chain: Enhancer of mRNA-decapping protein 4-like protein pdc1 (1076 aa).

Composition is skewed to low complexity over residues 1–19 and 53–69; these read MNEQ…LPNL and SSLL…SNQS. Disordered stretches follow at residues 1-82, 95-127, and 139-204; these read MNEQ…ASHS, GAKP…FNPV, and STGP…AEEQ. The segment covering 70-82 has biased composition (polar residues); the sequence is PSNSGPKYYASHS. Residues 153-173 are compositionally biased toward polar residues; the sequence is NDSQDTAFQSSRNMPSDTSVA. Residues 174 to 184 show a composition bias toward low complexity; it reads SPDYSHSQSSS. The span at 185–195 shows a compositional bias: polar residues; the sequence is PIANYQESGNS. WD repeat units follow at residues 292 to 334 and 402 to 441; these read NSPN…STSE and DTGI…PSTP. Disordered stretches follow at residues 666-714 and 892-934; these read RHST…SPSS and TAPD…PAQG. The segment covering 669-688 has biased composition (polar residues); that stretch reads TASPSTVNSGFSTPRSQATG. A phosphoserine mark is found at S671 and S673. T674 carries the post-translational modification Phosphothreonine. A compositionally biased stretch (basic and acidic residues) spans 695–706; the sequence is DKGERFETKDKS. Positions 789-1076 are interaction with dcp2; that stretch reads MQVALKEEIA…ISEISVASSN (288 aa). At S1075 the chain carries Phosphoserine.

The protein belongs to the WD repeat EDC4 family. Interacts with dcp2; via C-terminus.

It localises to the cytoplasm. Its subcellular location is the P-body. Its function is as follows. Involved in P-body formation. Acts as a functional homolog of human EDC4, which plays a role in mRNA decapping in the process of mRNA degradation. Enhances the decapping activity of dcp2. Together with edc3, acts as a scaffolding protein sufficient for the phase transition of the components of the 5' to 3' mRNA degradation machinery to form P-bodies. Intermolecular interactions between the edc3 Sm domain and at least 10 helical leucine-rich motifs in dcp2 and pdc1 build the core of the interaction network of this spontaneous clustering process. The sequence is that of Enhancer of mRNA-decapping protein 4-like protein pdc1 from Schizosaccharomyces pombe (strain 972 / ATCC 24843) (Fission yeast).